The chain runs to 195 residues: MKKKVLAIALVTVFTGTGVAQAADVTAQAVATWSATAKKDTTSKLVVTPLGSLAFQYAEGIKGFNSQKGLFDVAIEGDSTATAFKLTSRLITNTLTQLDTSGSTLNVGVDYNGAAVEKTGDTVMIDTANGVLGGNLSPLANGYNASNRTTAQDGFTFSIISGTTNGTTAVTDYSTLPEGIWSGDVSVQFDATWTS.

A signal peptide spans 1–22 (MKKKVLAIALVTVFTGTGVAQA).

Belongs to the EcpA/MatB fimbrillin family. Self-associates. Forms filaments. Interacts with EcpD.

It localises to the fimbrium. In terms of biological role, part of the ecpRABCDE operon, which encodes the E.coli common pilus (ECP). ECP is found in both commensal and pathogenic strains and plays a dual role in early-stage biofilm development and host cell recognition. Major subunit of the fimbria. The sequence is that of Common pilus major fimbrillin subunit EcpA (ecpA) from Escherichia coli O127:H6 (strain E2348/69 / EPEC).